Here is a 444-residue protein sequence, read N- to C-terminus: Cell wall mannoprotein PST1 (444 aa).

A signal peptide spans 1 to 19; it reads MQLHSLIASTALLITSALA. N-linked (GlcNAc...) asparagine glycosylation is found at Asn-57, Asn-76, Asn-83, Asn-86, Asn-196, Asn-210, Asn-228, Asn-235, Asn-242, Asn-263, Asn-268, Asn-280, Asn-292, Asn-305, and Asn-329. 2 stretches are compositionally biased toward low complexity: residues 359-381 and 395-417; these read SVKLSSTSKSQSSQTTAKVSKSS and KAAASASSVSSSSASSSSSKSSK. The interval 359–418 is disordered; it reads SVKLSSTSKSQSSQTTAKVSKSSSKAEEKKFTSGDIKAAASASSVSSSSASSSSSKSSKG. Asn-419 is lipidated: GPI-anchor amidated asparagine. Residues 420 to 444 constitute a propeptide, removed in mature form; sequence AAIMAPIGQTTPLVGLLTAIIMSIM.

It belongs to the SPS2 family. Post-translationally, extensively N- and O-mannosylated.

It localises to the cell membrane. The protein localises to the secreted. Its subcellular location is the cell wall. Functionally, has a partially redundant function to ECM33 in cell wall integrity. May be involved in a repair mechanism activated in response to cell wall damage. The polypeptide is Cell wall mannoprotein PST1 (PST1) (Saccharomyces cerevisiae (strain YJM789) (Baker's yeast)).